The sequence spans 184 residues: Latex serine proteinase inhibitor (184 aa).

Cysteines 45 and 89 form a disulfide. 2 N-linked (GlcNAc...) asparagine glycosylation sites follow: N84 and N90. A disulfide bond links C142 and C153.

It belongs to the protease inhibitor I3 (leguminous Kunitz-type inhibitor) family.

The protein localises to the secreted. The protein resides in the extracellular space. In Carica papaya (Papaya), this protein is Latex serine proteinase inhibitor.